A 484-amino-acid polypeptide reads, in one-letter code: Replication factor C large subunit (484 aa).

46–53 (GPPGSGKT) is a binding site for ATP. Over residues 463–478 (NADTKEKEKKDPKKQA) the composition is skewed to basic and acidic residues. Positions 463–484 (NADTKEKEKKDPKKQATLDSFF) are disordered.

The protein belongs to the activator 1 small subunits family. RfcL subfamily. Heteromultimer composed of small subunits (RfcS) and large subunits (RfcL).

Its function is as follows. Part of the RFC clamp loader complex which loads the PCNA sliding clamp onto DNA. The polypeptide is Replication factor C large subunit (Methanococcus maripaludis (strain C6 / ATCC BAA-1332)).